The following is a 190-amino-acid chain: Surfactant protein C (190 aa).

A propeptide spanning residues 1-23 is cleaved from the precursor; that stretch reads MDVGSKEVLIENPPDYSAAPQGR. Cys28 carries the S-palmitoyl cysteine lipid modification. A propeptide spanning residues 59–190 is cleaved from the precursor; it reads HMSQKHTEMV…LCGEVPLYYI (132 aa). The BRICHOS domain maps to 94 to 190; it reads FSIGSTGIVV…LCGEVPLYYI (97 aa). A disulfide bridge connects residues Cys121 and Cys182.

It is found in the secreted. Its subcellular location is the extracellular space. It localises to the surface film. In terms of biological role, pulmonary surfactant associated proteins promote alveolar stability by lowering the surface tension at the air-liquid interface in the peripheral air spaces. This is Surfactant protein C (SFTPC) from Neovison vison (American mink).